The primary structure comprises 138 residues: Translation initiation factor 2 subunit beta (138 aa).

This sequence belongs to the eIF-2-beta/eIF-5 family. As to quaternary structure, heterotrimer composed of an alpha, a beta and a gamma chain.

Functionally, eIF-2 functions in the early steps of protein synthesis by forming a ternary complex with GTP and initiator tRNA. The polypeptide is Translation initiation factor 2 subunit beta (Methanococcus maripaludis (strain C6 / ATCC BAA-1332)).